Consider the following 436-residue polypeptide: Glutamate-1-semialdehyde 2,1-aminomutase (436 aa).

An N6-(pyridoxal phosphate)lysine modification is found at Lys-270.

Belongs to the class-III pyridoxal-phosphate-dependent aminotransferase family. HemL subfamily. As to quaternary structure, homodimer. Pyridoxal 5'-phosphate is required as a cofactor.

It localises to the cytoplasm. The enzyme catalyses (S)-4-amino-5-oxopentanoate = 5-aminolevulinate. Its pathway is porphyrin-containing compound metabolism; protoporphyrin-IX biosynthesis; 5-aminolevulinate from L-glutamyl-tRNA(Glu): step 2/2. This is Glutamate-1-semialdehyde 2,1-aminomutase from Cutibacterium acnes (strain DSM 16379 / KPA171202) (Propionibacterium acnes).